Here is a 634-residue protein sequence, read N- to C-terminus: Transcription termination factor FttA (634 aa).

Residues 4–69 (EEVLENIRKE…ISIRPDPSVL (66 aa)) are KHa. Residues 70–137 (VEPEIAKQKI…WAPKPVRTPP (68 aa)) form a KHb region. A metallo-beta-lactamase N-terminus region spans residues 179 to 381 (WIRVSFLGGA…LIIESTYGAY (203 aa)). Histidine 240, histidine 242, aspartate 244, histidine 245, histidine 327, and aspartate 350 together coordinate Zn(2+). Residues 382-575 (DDVLPEREEA…LQVYTIEGFS (194 aa)) are beta-Casp. Positions 576–634 (GHSDRKQLIKYIRRLKPSPEKIIMVHGEESKCLDFADTVRRLFKKQTYVPMNLDAIRVK) are metallo-beta-lactamase C-terminus. A Zn(2+)-binding site is contributed by histidine 601.

It belongs to the metallo-beta-lactamase superfamily. RNA-metabolizing metallo-beta-lactamase-like family. FttA subfamily. As to quaternary structure, homodimer. Interacts with RNA polymerase (RNAP), interacts with the Spt4-Spt5 complex. It depends on Zn(2+) as a cofactor.

With respect to regulation, optimal NaCl concentration is 100 mM for nuclease activity on RNA. Terminates transcription on the whole genome. Termination is linked to FttA-mediated RNA cleavage and does not require NTP hydrolysis. Cleaves endonucleolytically at the RNA exit channel of RNA polymerase (RNAP); the 5'-3' exonuclease activity of this protein degrades the nascent RNA released from RNAP. Functionally, an endoribonuclease with no apparent exonuclease activity, has low activity on single-stranded DNA (endodeoxyribonuclease, endoDNase). The chain is Transcription termination factor FttA from Methanocaldococcus jannaschii (strain ATCC 43067 / DSM 2661 / JAL-1 / JCM 10045 / NBRC 100440) (Methanococcus jannaschii).